The primary structure comprises 335 residues: GTPase Obg (335 aa).

The Obg domain occupies 1-158; the sequence is MFLDQITIEL…RQVELELKLI (158 aa). Residues 159-334 enclose the OBG-type G domain; sequence ADIGLVGFPN…LNSLFTNRLS (176 aa). GTP contacts are provided by residues 165–172, 190–194, 215–218, 285–288, and 315–317; these read GFPNAGKS, FTTLQ, DIPG, NKID, and SGL. Residues Ser-172 and Thr-192 each coordinate Mg(2+).

The protein belongs to the TRAFAC class OBG-HflX-like GTPase superfamily. OBG GTPase family. As to quaternary structure, monomer. Mg(2+) is required as a cofactor.

Its subcellular location is the cytoplasm. In terms of biological role, an essential GTPase which binds GTP, GDP and possibly (p)ppGpp with moderate affinity, with high nucleotide exchange rates and a fairly low GTP hydrolysis rate. Plays a role in control of the cell cycle, stress response, ribosome biogenesis and in those bacteria that undergo differentiation, in morphogenesis control. This Chlamydia caviae (strain ATCC VR-813 / DSM 19441 / 03DC25 / GPIC) (Chlamydophila caviae) protein is GTPase Obg.